The sequence spans 81 residues: MVSIRLSRGGSKKRPFYHLTVTDSRSARDGAFIERLGFFNPIARGQEERLRVDNERLEYWKGQGAQMSDRVAKLIKDAAAA.

This sequence belongs to the bacterial ribosomal protein bS16 family.

In Teredinibacter turnerae (strain ATCC 39867 / T7901), this protein is Small ribosomal subunit protein bS16.